Here is a 335-residue protein sequence, read N- to C-terminus: Pro-cathepsin H (335 aa).

An N-terminal signal peptide occupies residues 1-22 (MWATLPLLCAGAWLLGVPVCGA). Residues 23–97 (AELCVNSLEK…AEIKHKYLWS (75 aa)) constitute a propeptide, activation peptide. Asn101 carries N-linked (GlcNAc...) asparagine glycosylation. Disulfide bonds link Cys102/Cys327, Cys138/Cys181, Cys172/Cys214, and Cys272/Cys322. Residues 106 to 115 (KSNYLRGTGP) constitute a propeptide that is removed on maturation. Cys141 is an active-site residue. An N-linked (GlcNAc...) asparagine glycan is attached at Asn230. Catalysis depends on residues His281 and Asn301.

It belongs to the peptidase C1 family. In terms of assembly, composed of a mini chain and a large chain. The large chain may be split into heavy and light chain. All chains are held together by disulfide bonds.

Its subcellular location is the lysosome. The enzyme catalyses Hydrolysis of proteins, acting as an aminopeptidase (notably, cleaving Arg-|-Xaa bonds) as well as an endopeptidase.. In terms of biological role, important for the overall degradation of proteins in lysosomes. The protein is Pro-cathepsin H (CTSH) of Homo sapiens (Human).